A 441-amino-acid chain; its full sequence is UPF0761 membrane protein RSc1559 (441 aa).

6 consecutive transmembrane segments (helical) span residues 44–64 (VLSL…FPMF), 101–121 (GLTA…MLTV), 141–161 (VLVF…SLSV), 182–202 (VVVG…LYVF), 207–227 (LVAW…FEIA), and 248–268 (FAAL…TLLG).

Belongs to the UPF0761 family.

The protein localises to the cell inner membrane. The chain is UPF0761 membrane protein RSc1559 from Ralstonia nicotianae (strain ATCC BAA-1114 / GMI1000) (Ralstonia solanacearum).